A 426-amino-acid chain; its full sequence is Probable imidazolonepropionase (426 aa).

4-imidazolone-5-propanoate contacts are provided by Y159 and H192. Y159 is a binding site for N-formimidoyl-L-glutamate. Residue H260 participates in Fe(3+) binding. A Zn(2+)-binding site is contributed by H260. E263 contributes to the 4-imidazolone-5-propanoate binding site. D334 provides a ligand contact to Fe(3+). Residue D334 participates in Zn(2+) binding. N336 is an N-formimidoyl-L-glutamate binding site.

Belongs to the metallo-dependent hydrolases superfamily. HutI family. It depends on Zn(2+) as a cofactor. The cofactor is Fe(3+).

The catalysed reaction is 4-imidazolone-5-propanoate + H2O = N-formimidoyl-L-glutamate. It functions in the pathway amino-acid degradation; L-histidine degradation into L-glutamate; N-formimidoyl-L-glutamate from L-histidine: step 3/3. The polypeptide is Probable imidazolonepropionase (AMDHD1) (Bos taurus (Bovine)).